The chain runs to 492 residues: Ketol-acid reductoisomerase (NADP(+)) (492 aa).

The KARI N-terminal Rossmann domain occupies 14 to 208 (LDQLGRCRFM…GGHKAGVLES (195 aa)). NADP(+) is bound by residues 45 to 48 (CGAQ), R68, R76, S78, and 108 to 110 (DKQ). Residue H132 is part of the active site. G158 is a binding site for NADP(+). KARI C-terminal knotted domains follow at residues 209-344 (SFVA…NAPK) and 345-485 (YDGK…MTDM). Mg(2+)-binding residues include D217, E221, E389, and E393. S414 is a substrate binding site.

The protein belongs to the ketol-acid reductoisomerase family. It depends on Mg(2+) as a cofactor.

The enzyme catalyses (2R)-2,3-dihydroxy-3-methylbutanoate + NADP(+) = (2S)-2-acetolactate + NADPH + H(+). It catalyses the reaction (2R,3R)-2,3-dihydroxy-3-methylpentanoate + NADP(+) = (S)-2-ethyl-2-hydroxy-3-oxobutanoate + NADPH + H(+). It participates in amino-acid biosynthesis; L-isoleucine biosynthesis; L-isoleucine from 2-oxobutanoate: step 2/4. Its pathway is amino-acid biosynthesis; L-valine biosynthesis; L-valine from pyruvate: step 2/4. Involved in the biosynthesis of branched-chain amino acids (BCAA). Catalyzes an alkyl-migration followed by a ketol-acid reduction of (S)-2-acetolactate (S2AL) to yield (R)-2,3-dihydroxy-isovalerate. In the isomerase reaction, S2AL is rearranged via a Mg-dependent methyl migration to produce 3-hydroxy-3-methyl-2-ketobutyrate (HMKB). In the reductase reaction, this 2-ketoacid undergoes a metal-dependent reduction by NADPH to yield (R)-2,3-dihydroxy-isovalerate. This is Ketol-acid reductoisomerase (NADP(+)) from Haemophilus influenzae (strain PittEE).